Consider the following 301-residue polypeptide: Lipoyl synthase (301 aa).

7 residues coordinate [4Fe-4S] cluster: Cys-37, Cys-42, Cys-48, Cys-63, Cys-67, Cys-70, and Ser-276. Positions 49–265 (WSKKHATVMI…ERIARTKGFL (217 aa)) constitute a Radical SAM core domain.

The protein belongs to the radical SAM superfamily. Lipoyl synthase family. [4Fe-4S] cluster serves as cofactor.

It is found in the cytoplasm. It catalyses the reaction [[Fe-S] cluster scaffold protein carrying a second [4Fe-4S](2+) cluster] + N(6)-octanoyl-L-lysyl-[protein] + 2 oxidized [2Fe-2S]-[ferredoxin] + 2 S-adenosyl-L-methionine + 4 H(+) = [[Fe-S] cluster scaffold protein] + N(6)-[(R)-dihydrolipoyl]-L-lysyl-[protein] + 4 Fe(3+) + 2 hydrogen sulfide + 2 5'-deoxyadenosine + 2 L-methionine + 2 reduced [2Fe-2S]-[ferredoxin]. The protein operates within protein modification; protein lipoylation via endogenous pathway; protein N(6)-(lipoyl)lysine from octanoyl-[acyl-carrier-protein]: step 2/2. In terms of biological role, catalyzes the radical-mediated insertion of two sulfur atoms into the C-6 and C-8 positions of the octanoyl moiety bound to the lipoyl domains of lipoate-dependent enzymes, thereby converting the octanoylated domains into lipoylated derivatives. The polypeptide is Lipoyl synthase (Rickettsia felis (strain ATCC VR-1525 / URRWXCal2) (Rickettsia azadi)).